The chain runs to 351 residues: MKEMINLDSSSEPSIVTKQFSVEECLSKLKEQHCYVPMRTIGRLRLRKSSDQTEKKCWKEKLMKIRSELEELWEQSMMYEEQKELTQLGEMLDRLWDKHINSEGSKSETISDTAISGNDDTMEKRLEQFSDDTLQDTLETEKNLNSKTSESLKSPTLSYPFDLDSLDKRIFKLESKIGYADEPLSELLNKCMEKLEIVEQDPQFWQSRIESWKQLLAKDFLKHHERNLCSIEKQTTLKNSSLKELCTEEDIVIMLEICSSQLPFVEQYMPILPLLLERLKSLQNMHTDAAEAISSWQGSKDVMMTMQSELNEWKNTVERLDHSKFYTQSVEEMRRLSDTVTQLEKRVLKLQ.

It is found in the cytoplasm. Required for correct meiotic chromosome segregation. This Schizosaccharomyces pombe (strain 972 / ATCC 24843) (Fission yeast) protein is Meiotically up-regulated gene 1 protein (mug1).